The following is a 513-amino-acid chain: Homeobox and leucine zipper protein Homez (513 aa).

The homeobox 1 DNA-binding region spans 31–90 (WTQAVQTSELDGNEHLLQAFSYFPYPSLADIALLCLRHGLQMEKVKTWFMAQRLRCGISW). Glycyl lysine isopeptide (Lys-Gly) (interchain with G-Cter in SUMO2) cross-links involve residues Lys156, Lys174, and Lys176. Disordered stretches follow at residues 200–221 (LSKE…ASWN), 241–287 (SCKE…SFSP), 303–328 (RLRN…HQRK), 402–429 (PAIS…PPPD), and 480–513 (LDEE…IIRD). The segment covering 205 to 217 (AGGGPDQSCGGGT) has biased composition (gly residues). Residues 248–260 (PSGTPPSSSASSP) show a composition bias toward low complexity. At Ser320 the chain carries Phosphoserine. 2 DNA-binding regions (homeobox) span residues 324–384 (QHQR…KHGQ) and 418–477 (TPPL…AEVV). The Nuclear localization signal signature appears at 327 to 332 (RKTKRK). Thr418 bears the Phosphothreonine mark. Positions 419–429 (PPLPAPPPPPD) are enriched in pro residues.

Homodimer or heterodimer (Potential). Interacts with HOXC8.

Its subcellular location is the nucleus. May function as a transcriptional regulator. The chain is Homeobox and leucine zipper protein Homez (Homez) from Rattus norvegicus (Rat).